The primary structure comprises 126 residues: Histone H2B type 2-E (126 aa).

Over residues 1 to 12 (MPEPAKSAPAPK) the composition is skewed to low complexity. Residues 1–35 (MPEPAKSAPAPKKGSKKAVTKAQKKDGKKRKRSRK) are disordered. Residue Pro2 is modified to N-acetylproline. ADP-ribosyl glutamic acid is present on Glu3. The residue at position 6 (Lys6) is an N6-(2-hydroxyisobutyryl)lysine; alternate. Lys6 bears the N6-(beta-hydroxybutyryl)lysine; alternate mark. Lys6 carries the N6-acetyllysine; alternate modification. Lys6 carries the post-translational modification N6-butyryllysine; alternate. N6-crotonyllysine; alternate is present on Lys6. Lys6 bears the N6-lactoyllysine; alternate mark. A Glycyl lysine isopeptide (Lys-Gly) (interchain with G-Cter in SUMO2); alternate cross-link involves residue Lys6. Ser7 bears the ADP-ribosylserine mark. Lys12 carries the post-translational modification N6-(beta-hydroxybutyryl)lysine; alternate. An N6-acetyllysine; alternate mark is found at Lys12 and Lys13. Residues Lys12 and Lys13 each carry the N6-crotonyllysine; alternate modification. Lys12 is subject to N6-lactoyllysine; alternate. N6-(2-hydroxyisobutyryl)lysine; alternate is present on Lys13. Ser15 is subject to Phosphoserine; by STK4/MST1. 4 positions are modified to N6-acetyllysine; alternate: Lys16, Lys17, Lys21, and Lys24. Residues Lys16, Lys17, Lys21, and Lys24 each carry the N6-crotonyllysine; alternate modification. 4 positions are modified to N6-lactoyllysine; alternate: Lys16, Lys17, Lys21, and Lys24. 2 positions are modified to N6-(beta-hydroxybutyryl)lysine; alternate: Lys17 and Lys21. An N6-glutaryllysine; alternate modification is found at Lys17. N6-(2-hydroxyisobutyryl)lysine; alternate is present on residues Lys21 and Lys24. Position 21 is an N6-butyryllysine; alternate (Lys21). Lys21 participates in a covalent cross-link: Glycyl lysine isopeptide (Lys-Gly) (interchain with G-Cter in SUMO2); alternate. An N6-(2-hydroxyisobutyryl)lysine modification is found at Lys25. The residue at position 35 (Lys35) is an N6-(2-hydroxyisobutyryl)lysine; alternate. The residue at position 35 (Lys35) is an N6-(beta-hydroxybutyryl)lysine; alternate. N6-crotonyllysine; alternate is present on Lys35. Lys35 bears the N6-glutaryllysine; alternate mark. The residue at position 35 (Lys35) is an N6-succinyllysine; alternate. A Glycyl lysine isopeptide (Lys-Gly) (interchain with G-Cter in ubiquitin); alternate cross-link involves residue Lys35. At Glu36 the chain carries PolyADP-ribosyl glutamic acid. Position 37 is a phosphoserine; by AMPK (Ser37). N6-(2-hydroxyisobutyryl)lysine; alternate is present on residues Lys44, Lys47, and Lys58. At Lys44 the chain carries N6-lactoyllysine; alternate. N6-glutaryllysine; alternate is present on residues Lys44 and Lys47. Residue Lys47 is modified to N6-methyllysine; alternate. Lys58 is modified (N6,N6-dimethyllysine; alternate). Dimethylated arginine is present on Arg80. Lys86 carries the post-translational modification N6-(2-hydroxyisobutyryl)lysine; alternate. Lys86 carries the N6-(beta-hydroxybutyryl)lysine; alternate modification. Lys86 bears the N6-acetyllysine; alternate mark. Lys86 carries the post-translational modification N6-lactoyllysine; alternate. N6,N6,N6-trimethyllysine; alternate is present on Lys86. Omega-N-methylarginine is present on residues Arg87 and Arg93. Residue Lys109 is modified to N6-(2-hydroxyisobutyryl)lysine; alternate. Residue Lys109 is modified to N6-lactoyllysine; alternate. N6-glutaryllysine; alternate is present on Lys109. Lys109 is modified (N6-methyllysine; alternate). A glycan (O-linked (GlcNAc) serine) is linked at Ser113. Thr116 carries the phosphothreonine modification. Lys117 and Lys121 each carry N6-(2-hydroxyisobutyryl)lysine; alternate. N6-(beta-hydroxybutyryl)lysine; alternate occurs at positions 117 and 121. N6-lactoyllysine; alternate occurs at positions 117 and 121. N6-glutaryllysine; alternate occurs at positions 117 and 121. N6-succinyllysine; alternate occurs at positions 117 and 121. Lys117 is modified (N6-malonyllysine; alternate). Lys117 bears the N6-methylated lysine; alternate mark. A Glycyl lysine isopeptide (Lys-Gly) (interchain with G-Cter in ubiquitin); alternate cross-link involves residue Lys121.

This sequence belongs to the histone H2B family. In terms of assembly, the nucleosome is a histone octamer containing two molecules each of H2A, H2B, H3 and H4 assembled in one H3-H4 heterotetramer and two H2A-H2B heterodimers. The octamer wraps approximately 147 bp of DNA. Post-translationally, monoubiquitination at Lys-35 (H2BK34Ub) by the MSL1/MSL2 dimer is required for histone H3 'Lys-4' (H3K4me) and 'Lys-79' (H3K79me) methylation and transcription activation at specific gene loci, such as HOXA9 and MEIS1 loci. Similarly, monoubiquitination at Lys-121 (H2BK120Ub) by the RNF20/40 complex gives a specific tag for epigenetic transcriptional activation and is also prerequisite for histone H3 'Lys-4' and 'Lys-79' methylation. It also functions cooperatively with the FACT dimer to stimulate elongation by RNA polymerase II. H2BK120Ub also acts as a regulator of mRNA splicing: deubiquitination by USP49 is required for efficient cotranscriptional splicing of a large set of exons. In terms of processing, phosphorylation at Ser-37 (H2BS36ph) by AMPK in response to stress promotes transcription. Phosphorylated on Ser-15 (H2BS14ph) by STK4/MST1 during apoptosis; which facilitates apoptotic chromatin condensation. Also phosphorylated on Ser-15 in response to DNA double strand breaks (DSBs), and in correlation with somatic hypermutation and immunoglobulin class-switch recombination. GlcNAcylation at Ser-113 promotes monoubiquitination of Lys-121. It fluctuates in response to extracellular glucose, and associates with transcribed genes. Post-translationally, ADP-ribosylated by PARP1 or PARP2 on Ser-7 (H2BS6ADPr) in response to DNA damage. H2BS6ADPr promotes recruitment of CHD1L. Mono-ADP-ribosylated on Glu-3 (H2BE2ADPr) by PARP3 in response to single-strand breaks. Poly ADP-ribosylation on Glu-36 (H2BE35ADPr) by PARP1 regulates adipogenesis: it inhibits phosphorylation at Ser-37 (H2BS36ph), thereby blocking expression of pro-adipogenetic genes. In terms of processing, crotonylation (Kcr) is specifically present in male germ cells and marks testis-specific genes in post-meiotic cells, including X-linked genes that escape sex chromosome inactivation in haploid cells. Crotonylation marks active promoters and enhancers and confers resistance to transcriptional repressors. It is also associated with post-meiotically activated genes on autosomes. Lactylated in macrophages by EP300/P300 by using lactoyl-CoA directly derived from endogenous or exogenous lactate, leading to stimulates gene transcription.

Its subcellular location is the nucleus. The protein resides in the chromosome. Core component of nucleosome. Nucleosomes wrap and compact DNA into chromatin, limiting DNA accessibility to the cellular machineries which require DNA as a template. Histones thereby play a central role in transcription regulation, DNA repair, DNA replication and chromosomal stability. DNA accessibility is regulated via a complex set of post-translational modifications of histones, also called histone code, and nucleosome remodeling. Functionally, has broad antibacterial activity. May contribute to the formation of the functional antimicrobial barrier of the colonic epithelium, and to the bactericidal activity of amniotic fluid. The chain is Histone H2B type 2-E from Homo sapiens (Human).